The following is a 57-amino-acid chain: Large ribosomal subunit protein bL32 (57 aa).

Over residues 1-19 (MAVPKRRMSRANTRSRRAQ) the composition is skewed to basic residues. Positions 1–20 (MAVPKRRMSRANTRSRRAQW) are disordered.

The protein belongs to the bacterial ribosomal protein bL32 family.

This Mycolicibacterium smegmatis (strain ATCC 700084 / mc(2)155) (Mycobacterium smegmatis) protein is Large ribosomal subunit protein bL32.